Here is a 259-residue protein sequence, read N- to C-terminus: Proteasome subunit beta type-4 (259 aa).

It belongs to the peptidase T1B family. In terms of assembly, the 26S proteasome consists of a 20S proteasome core and two 19S regulatory subunits. The 20S proteasome core is composed of 28 subunits that are arranged in four stacked rings, resulting in a barrel-shaped structure. The two end rings are each formed by seven alpha subunits, and the two central rings are each formed by seven beta subunits. The catalytic chamber with the active sites is on the inside of the barrel.

Its subcellular location is the cytoplasm. It is found in the nucleus. In terms of biological role, non-catalytic component of the proteasome, a multicatalytic proteinase complex which is characterized by its ability to cleave peptides with Arg, Phe, Tyr, Leu, and Glu adjacent to the leaving group at neutral or slightly basic pH. The proteasome has an ATP-dependent proteolytic activity. The polypeptide is Proteasome subunit beta type-4 (psmB4-1) (Dictyostelium discoideum (Social amoeba)).